A 434-amino-acid chain; its full sequence is Eukaryotic translation initiation factor 3 subunit E (434 aa).

A PCI domain is found at 219-392; sequence FFNHPKGRDL…GHVVMGTQPL (174 aa).

It belongs to the eIF-3 subunit E family. As to quaternary structure, component of the eukaryotic translation initiation factor 3 (eIF-3) complex. The eIF-3 complex interacts with pix. Interacts with mxt.

It localises to the cytoplasm. Its function is as follows. Component of the eukaryotic translation initiation factor 3 (eIF-3) complex, which is involved in protein synthesis of a specialized repertoire of mRNAs and, together with other initiation factors, stimulates binding of mRNA and methionyl-tRNAi to the 40S ribosome. The eIF-3 complex specifically targets and initiates translation of a subset of mRNAs involved in cell proliferation. The protein is Eukaryotic translation initiation factor 3 subunit E (eIF3-S6) of Drosophila pseudoobscura pseudoobscura (Fruit fly).